The primary structure comprises 369 residues: Mitogen-activated protein kinase 11 (369 aa).

A Protein kinase domain is found at 40 to 326; the sequence is VPPLRPIGRG…VDEALCHPYL (287 aa). Residues 46–54 and lysine 69 each bind ATP; that span reads IGRGASGIV. Aspartate 166 acts as the Proton acceptor in catalysis. Threonine 198 carries the phosphothreonine modification. The TXY signature appears at 198-200; it reads TEY. Residue tyrosine 200 is modified to Phosphotyrosine. Position 203 is a phosphothreonine (threonine 203).

Belongs to the protein kinase superfamily. CMGC Ser/Thr protein kinase family. MAP kinase subfamily. Interacts with MKK1, MKK2 and MKK6. Post-translationally, dually phosphorylated on Thr-198 and Tyr-200, which activates the enzyme.

The enzyme catalyses L-seryl-[protein] + ATP = O-phospho-L-seryl-[protein] + ADP + H(+). The catalysed reaction is L-threonyl-[protein] + ATP = O-phospho-L-threonyl-[protein] + ADP + H(+). Its activity is regulated as follows. Activated by threonine and tyrosine phosphorylation. In Arabidopsis thaliana (Mouse-ear cress), this protein is Mitogen-activated protein kinase 11 (MPK11).